We begin with the raw amino-acid sequence, 264 residues long: MDVYGLIGNPVEHSVSPPMHEAAYEALGLDARYVTFEPASEQLDTALEGASALGVRGLNVTIPFKEDVLDVVEPDPLAERIGAVNTIDFEGEPTGHNTDAAGVIRAFQHHDVERSGTAVVVGAGGAGRAAAFALADEGMEVHIANRTVSRATALATEVPDATGHGLDELAELVPDADVLVNATSVGMEADETPVPKRHLHEGLAVLDAVYAPLETRLLREADAAGATTIDGAWMLLFQGVEAFEIWTGKAAPVEPMNEALRSSL.

Shikimate is bound by residues 14–16 (SVS) and Thr-61. The Proton acceptor role is filled by Lys-65. The shikimate site is built by Asn-85 and Asp-99. NADP(+) is bound by residues 122-126 (GAGGA), 145-150 (NRTVSR), and Ala-208. Residue Tyr-210 coordinates shikimate. Gly-231 is a binding site for NADP(+).

Belongs to the shikimate dehydrogenase family. As to quaternary structure, homodimer.

It carries out the reaction shikimate + NADP(+) = 3-dehydroshikimate + NADPH + H(+). The protein operates within metabolic intermediate biosynthesis; chorismate biosynthesis; chorismate from D-erythrose 4-phosphate and phosphoenolpyruvate: step 4/7. Functionally, involved in the biosynthesis of the chorismate, which leads to the biosynthesis of aromatic amino acids. Catalyzes the reversible NADPH linked reduction of 3-dehydroshikimate (DHSA) to yield shikimate (SA). The chain is Shikimate dehydrogenase (NADP(+)) from Natronomonas pharaonis (strain ATCC 35678 / DSM 2160 / CIP 103997 / JCM 8858 / NBRC 14720 / NCIMB 2260 / Gabara) (Halobacterium pharaonis).